Here is a 149-residue protein sequence, read N- to C-terminus: ATP synthase epsilon chain (149 aa).

2 stretches are compositionally biased toward basic and acidic residues: residues 99-116 (DVERAESAEERAKRRLEE) and 123-134 (RETHEAARDRAR). Residues 99-149 (DVERAESAEERAKRRLEEGVQEEERETHEAARDRARNRLRVAMGKVGTRQS) are disordered.

It belongs to the ATPase epsilon chain family. As to quaternary structure, F-type ATPases have 2 components, CF(1) - the catalytic core - and CF(0) - the membrane proton channel. CF(1) has five subunits: alpha(3), beta(3), gamma(1), delta(1), epsilon(1). CF(0) has three main subunits: a, b and c.

Its subcellular location is the cell inner membrane. Produces ATP from ADP in the presence of a proton gradient across the membrane. The protein is ATP synthase epsilon chain of Salinibacter ruber (strain DSM 13855 / M31).